We begin with the raw amino-acid sequence, 714 residues long: Forkhead box protein P2 (714 aa).

The segment covering 1 to 28 (MMQESATETISNSSMNQNGMSTLSSQLD) has biased composition (polar residues). Disordered stretches follow at residues 1-45 (MMQE…SEVS) and 280-338 (DNGI…TGAS). A compositionally biased stretch (low complexity) spans 291–304 (TTNNSSSTTSSTTS). The segment covering 314–323 (SIVNGQSSVL) has biased composition (polar residues). Residues 325 to 336 (ARRDSSSHEETG) show a composition bias toward basic and acidic residues. The C2H2-type zinc-finger motif lies at 345-370 (GVCKWPGCESICEDFGQFLKHLNNEH). The interval 387-408 (VQQLEIQLSKERERLQAMMTHL) is leucine-zipper. Positions 421–425 (PLNLV) are CTBP1-binding. Positions 437–458 (TSPQSLPQTPTTPTAPVTPITQ) are enriched in low complexity. The disordered stretch occupies residues 437–464 (TSPQSLPQTPTTPTAPVTPITQGPSVIT). The fork-head DNA-binding region spans 503 to 593 (RPPFTYATLI…SQKITGSPTL (91 aa)). Disordered stretches follow at residues 648 to 667 (LDHI…QPHI) and 677 to 714 (VIAE…EDLE). Over residues 698 to 714 (LEDDREIEEEPLSEDLE) the composition is skewed to acidic residues.

In terms of assembly, forms homodimers and heterodimers with FOXP1 and FOXP4. Dimerization is required for DNA-binding. Interacts with CTBP1. Interacts with FOXP1. Interacts with TBR1. Interacts with ZMYM2. As to expression, highest expression in lung. Lower expression in spleen, skeletal muscle, brain, kidney and small intestine.

It localises to the nucleus. Functionally, transcriptional repressor that may play a role in the specification and differentiation of lung epithelium. May also play a role in developing neural, gastrointestinal and cardiovascular tissues. Can act with CTBP1 to synergistically repress transcription but CTPBP1 is not essential. Plays a role in synapse formation by regulating SRPX2 levels. The polypeptide is Forkhead box protein P2 (Foxp2) (Mus musculus (Mouse)).